The sequence spans 1072 residues: Carbamoyl phosphate synthase large chain (1072 aa).

The interval 1–401 (MPKRLDINTI…SLLKAVRSLE (401 aa)) is carboxyphosphate synthetic domain. Residues arginine 129, arginine 169, glycine 175, glycine 176, lysine 208, isoleucine 210, glutamate 215, glycine 241, valine 242, histidine 243, glutamine 284, and glutamate 298 each coordinate ATP. An ATP-grasp 1 domain is found at 133 to 327 (RTLMQDLNEP…IAKLAAKIAV (195 aa)). 3 residues coordinate Mg(2+): glutamine 284, glutamate 298, and asparagine 300. Mn(2+) contacts are provided by glutamine 284, glutamate 298, and asparagine 300. The oligomerization domain stretch occupies residues 402–546 (LGIYHLELDH…YSTYADENES (145 aa)). The segment at 547–929 (IVTDRKSVVV…ALYKGLVASG (383 aa)) is carbamoyl phosphate synthetic domain. Residues 671-861 (EAALTKLGIP…MANVATKVIL (191 aa)) enclose the ATP-grasp 2 domain. Positions 707, 746, 752, 777, 778, 779, 780, 820, and 832 each coordinate ATP. Mg(2+) is bound by residues glutamine 820, glutamate 832, and asparagine 834. Residues glutamine 820, glutamate 832, and asparagine 834 each contribute to the Mn(2+) site. One can recognise an MGS-like domain in the interval 930–1072 (INIPTHGSVI…QTKRHEVVHA (143 aa)). Residues 930–1072 (INIPTHGSVI…QTKRHEVVHA (143 aa)) are allosteric domain.

The protein belongs to the CarB family. In terms of assembly, composed of two chains; the small (or glutamine) chain promotes the hydrolysis of glutamine to ammonia, which is used by the large (or ammonia) chain to synthesize carbamoyl phosphate. Tetramer of heterodimers (alpha,beta)4. Mg(2+) serves as cofactor. It depends on Mn(2+) as a cofactor.

It carries out the reaction hydrogencarbonate + L-glutamine + 2 ATP + H2O = carbamoyl phosphate + L-glutamate + 2 ADP + phosphate + 2 H(+). The catalysed reaction is hydrogencarbonate + NH4(+) + 2 ATP = carbamoyl phosphate + 2 ADP + phosphate + 2 H(+). Its pathway is amino-acid biosynthesis; L-arginine biosynthesis; carbamoyl phosphate from bicarbonate: step 1/1. It functions in the pathway pyrimidine metabolism; UMP biosynthesis via de novo pathway; (S)-dihydroorotate from bicarbonate: step 1/3. Its function is as follows. Large subunit of the glutamine-dependent carbamoyl phosphate synthetase (CPSase). CPSase catalyzes the formation of carbamoyl phosphate from the ammonia moiety of glutamine, carbonate, and phosphate donated by ATP, constituting the first step of 2 biosynthetic pathways, one leading to arginine and/or urea and the other to pyrimidine nucleotides. The large subunit (synthetase) binds the substrates ammonia (free or transferred from glutamine from the small subunit), hydrogencarbonate and ATP and carries out an ATP-coupled ligase reaction, activating hydrogencarbonate by forming carboxy phosphate which reacts with ammonia to form carbamoyl phosphate. This is Carbamoyl phosphate synthase large chain from Bacillus cereus (strain B4264).